The following is a 328-amino-acid chain: MSQKRSLVFAIRDFPPGCGTHIDVSSSLNHPAEKAFKHPRTGDVSGENLSFAEAKPEGTCLKRESADQDHIFAAPEHNAKREPAGQDHVVAATTVAYATSSHRQKVEIGNSDCDPTPREKVLEVLSLFKQVYNQLDRDKKARRGGDFLDATSRIDLKTLTVLEKMGKQVNTEKRIGSVPGINIGDVFQYKTELRVVGLHSKPMCGIDYIKLGDDRITTSIVASEGYGYNDTYNSGVMVYTGEGGNVINKQKKTEDQKLVKGNLALATSMRQKSQVRVIRGEERLDRKGKRYVYDGLYMVEEYWVERDVRGKSVYKFKLCRIPGQLPLT.

In terms of domain architecture, YDG spans 176–320 (GSVPGINIGD…KSVYKFKLCR (145 aa)).

It localises to the nucleus. The sequence is that of YDG domain-containing protein At5g47150 from Arabidopsis thaliana (Mouse-ear cress).